A 433-amino-acid chain; its full sequence is Probable M18 family aminopeptidase 2 (433 aa).

Zn(2+) contacts are provided by H84, H161, and H409.

Belongs to the peptidase M18 family. Zn(2+) serves as cofactor.

This chain is Probable M18 family aminopeptidase 2 (apeB), found in Clostridium acetobutylicum (strain ATCC 824 / DSM 792 / JCM 1419 / IAM 19013 / LMG 5710 / NBRC 13948 / NRRL B-527 / VKM B-1787 / 2291 / W).